The sequence spans 457 residues: Siroheme synthase 2 (457 aa).

The precorrin-2 dehydrogenase /sirohydrochlorin ferrochelatase stretch occupies residues 1–204 (MDHLPIFCQL…DDRQAVADTT (204 aa)). Residues 22 to 23 (DV) and 43 to 44 (LD) contribute to the NAD(+) site. Position 128 is a phosphoserine (Ser128). Residues 216-457 (GEVVLVGAGP…RDKLNWFSNH (242 aa)) form a uroporphyrinogen-III C-methyltransferase region. Pro225 is a binding site for S-adenosyl-L-methionine. Asp248 functions as the Proton acceptor in the catalytic mechanism. The active-site Proton donor is Lys270. Residues 301–303 (GGD), Ile306, 331–332 (TA), Met382, and Gly411 contribute to the S-adenosyl-L-methionine site.

In the N-terminal section; belongs to the precorrin-2 dehydrogenase / sirohydrochlorin ferrochelatase family. The protein in the C-terminal section; belongs to the precorrin methyltransferase family.

The enzyme catalyses uroporphyrinogen III + 2 S-adenosyl-L-methionine = precorrin-2 + 2 S-adenosyl-L-homocysteine + H(+). It carries out the reaction precorrin-2 + NAD(+) = sirohydrochlorin + NADH + 2 H(+). It catalyses the reaction siroheme + 2 H(+) = sirohydrochlorin + Fe(2+). It participates in cofactor biosynthesis; adenosylcobalamin biosynthesis; precorrin-2 from uroporphyrinogen III: step 1/1. Its pathway is cofactor biosynthesis; adenosylcobalamin biosynthesis; sirohydrochlorin from precorrin-2: step 1/1. It functions in the pathway porphyrin-containing compound metabolism; siroheme biosynthesis; precorrin-2 from uroporphyrinogen III: step 1/1. The protein operates within porphyrin-containing compound metabolism; siroheme biosynthesis; siroheme from sirohydrochlorin: step 1/1. It participates in porphyrin-containing compound metabolism; siroheme biosynthesis; sirohydrochlorin from precorrin-2: step 1/1. Multifunctional enzyme that catalyzes the SAM-dependent methylations of uroporphyrinogen III at position C-2 and C-7 to form precorrin-2 via precorrin-1. Then it catalyzes the NAD-dependent ring dehydrogenation of precorrin-2 to yield sirohydrochlorin. Finally, it catalyzes the ferrochelation of sirohydrochlorin to yield siroheme. The chain is Siroheme synthase 2 from Klebsiella pneumoniae subsp. pneumoniae (strain ATCC 700721 / MGH 78578).